The following is a 129-amino-acid chain: Large ribosomal subunit protein bL17 (129 aa).

This sequence belongs to the bacterial ribosomal protein bL17 family. Part of the 50S ribosomal subunit. Contacts protein L32.

The sequence is that of Large ribosomal subunit protein bL17 from Actinobacillus succinogenes (strain ATCC 55618 / DSM 22257 / CCUG 43843 / 130Z).